Reading from the N-terminus, the 274-residue chain is Bis(5'-nucleosyl)-tetraphosphatase, symmetrical (274 aa).

It belongs to the Ap4A hydrolase family.

It catalyses the reaction P(1),P(4)-bis(5'-adenosyl) tetraphosphate + H2O = 2 ADP + 2 H(+). Functionally, hydrolyzes diadenosine 5',5'''-P1,P4-tetraphosphate to yield ADP. The chain is Bis(5'-nucleosyl)-tetraphosphatase, symmetrical from Shewanella putrefaciens (strain CN-32 / ATCC BAA-453).